The primary structure comprises 199 residues: Recombination protein RecR (199 aa).

A C4-type zinc finger spans residues 58–73 (CSTCNNLTDKDPCTIC). In terms of domain architecture, Toprim spans 81–176 (NLICVVQDAR…RVTRLAYGLP (96 aa)).

This sequence belongs to the RecR family.

May play a role in DNA repair. It seems to be involved in an RecBC-independent recombinational process of DNA repair. It may act with RecF and RecO. The chain is Recombination protein RecR from Natranaerobius thermophilus (strain ATCC BAA-1301 / DSM 18059 / JW/NM-WN-LF).